We begin with the raw amino-acid sequence, 701 residues long: Cytosolic endo-beta-N-acetylglucosaminidase 2 (701 aa).

Belongs to the glycosyl hydrolase 85 family.

It localises to the cytoplasm. The protein localises to the cytosol. The catalysed reaction is an N(4)-(oligosaccharide-(1-&gt;3)-[oligosaccharide-(1-&gt;6)]-beta-D-Man-(1-&gt;4)-beta-D-GlcNAc-(1-&gt;4)-alpha-D-GlcNAc)-L-asparaginyl-[protein] + H2O = an oligosaccharide-(1-&gt;3)-[oligosaccharide-(1-&gt;6)]-beta-D-Man-(1-&gt;4)-D-GlcNAc + N(4)-(N-acetyl-beta-D-glucosaminyl)-L-asparaginyl-[protein]. Endoglycosidase that releases N-glycans from glycoproteins by cleaving the beta-1,4-glycosidic bond in the N,N'-diacetylchitobiose core. Involved in the production of high-mannose type N-glycans during plant development and fruit maturation. The protein is Cytosolic endo-beta-N-acetylglucosaminidase 2 of Arabidopsis thaliana (Mouse-ear cress).